The chain runs to 358 residues: Trace amine-associated receptor 7a (358 aa).

Residues 1–47 (MDKLVDHFLSDQSRTMNEDLFSATSTELCYENLNRSCVRSPYSPGPR) are Extracellular-facing. Asn34 carries N-linked (GlcNAc...) asparagine glycosylation. 2 disulfide bridges follow: Cys37–Cys201 and Cys120–Cys205. A helical transmembrane segment spans residues 48 to 68 (LILYAVFGFGAALAVCGNLLV). At 69 to 83 (MTSILHFRQLHSPAN) the chain is on the cytoplasmic side. A helical transmembrane segment spans residues 84–104 (FLVASLACADFLVGLTVMPFS). The Extracellular portion of the chain corresponds to 105–121 (TVRSVEGCWYFGESYCK). Residues 122-143 (FHSCFEGSFCYSSIFHLCFISV) traverse the membrane as a helical segment. The Cytoplasmic segment spans residues 144–166 (DRYIAVSDPLTYPTRFTASVSGK). Residues 167–187 (CITFSWLLSIIYSFSLLYTGA) traverse the membrane as a helical segment. At 188-212 (NEAGLEDLVSVLTCVGGCQIAVNQS) the chain is on the extracellular side. Asn210 carries N-linked (GlcNAc...) asparagine glycosylation. The chain crosses the membrane as a helical span at residues 213–233 (WVFINFLLFLIPTLVMMTVYS). The Cytoplasmic segment spans residues 234-274 (KIFLIAKQQAQNIEKMSKQTARASESYKDRVAKRERKAAKT). Residues 275–295 (LGIAVAAFLLSWLPYFIDSII) form a helical membrane-spanning segment. Topologically, residues 296–309 (DAFLGFITPTYVYE) are extracellular. A helical membrane pass occupies residues 310–333 (ILVWIAYYNSAMNPLIYAFFYPWF). Topologically, residues 334–358 (RKAIKLIVTGKILRENSSTTNLFPE) are cytoplasmic.

This sequence belongs to the G-protein coupled receptor 1 family. As to expression, specifically expressed in neurons of the olfactory epithelium.

The protein localises to the cell membrane. Its function is as follows. Olfactory receptor specific for N,N-dimethylalkylamines trace amines. Trace amine compounds are enriched in animal body fluids and act on trace amine-associated receptors (TAARs) to elicit both intraspecific and interspecific innate behaviors. Ligand-binding causes a conformation change that triggers signaling via G(s)-class of G alpha proteins (GNAL or GNAS). This Mus musculus (Mouse) protein is Trace amine-associated receptor 7a.